Consider the following 432-residue polypeptide: Trigger factor (432 aa).

The PPIase FKBP-type domain maps to 161-246; the sequence is GKRVSIDFVG…VNKVEARQLP (86 aa).

The protein belongs to the FKBP-type PPIase family. Tig subfamily.

It localises to the cytoplasm. It catalyses the reaction [protein]-peptidylproline (omega=180) = [protein]-peptidylproline (omega=0). Its function is as follows. Involved in protein export. Acts as a chaperone by maintaining the newly synthesized protein in an open conformation. Functions as a peptidyl-prolyl cis-trans isomerase. In Vibrio vulnificus (strain YJ016), this protein is Trigger factor.